Reading from the N-terminus, the 967-residue chain is Haze protective factor 1 (967 aa).

The signal sequence occupies residues Met1–Gly23. Asn28 and Asn35 each carry an N-linked (GlcNAc...) asparagine glycan. Positions Ser72–Gly301 are disordered. A run of 9 repeats spans residues Ser93 to Ser105, Ser106 to Ser118, Ser119 to Ser131, Ser132 to Ser144, Ser153 to Thr165, Ser166 to Ser178, Ser179 to Ser191, Ser192 to Ser204, and Ser205 to Ser217. Positions Ser93–Ser278 are 13 X approximate repeats, Ser-rich. Residues Ser218–Ser230 form a 1-10; approximate repeat. One copy of the 1-11; approximate repeat lies at Ser234 to Ser247. The 1-12; approximate repeat unit spans residues Ser248 to Ser259. A 1-13 repeat occupies Ser266 to Ser278. N-linked (GlcNAc...) asparagine glycosylation is found at Asn493, Asn601, and Asn638. 4 repeat units span residues Ser745–Thr780, Ser781–Val815, Ser816–Ala854, and Ala855–Ala893. The tract at residues Ser745–Thr902 is 4.5 X approximate tandem repeats, Thr-rich. Residues Lys836–Lys857 form a disordered region. Residues Ser894 to Thr902 form a 2-5; truncated repeat. A lipid anchor (GPI-anchor amidated alanine) is attached at Ala946. A propeptide spans Ala947 to Asn967 (removed in mature form).

The protein belongs to the SRP1/TIP1 family. Post-translationally, the GPI-anchor is attached to the protein in the endoplasmic reticulum and serves to target the protein to the cell surface. There, the glucosamine-inositol phospholipid moiety is cleaved off and the GPI-modified mannoprotein is covalently attached via its lipidless GPI glycan remnant to the 1,6-beta-glucan of the outer cell wall layer.

It is found in the secreted. The protein localises to the cell wall. It localises to the membrane. In terms of biological role, involved in cell wall organization and biosynthesis. The polypeptide is Haze protective factor 1 (HPF1) (Saccharomyces cerevisiae (strain ATCC 204508 / S288c) (Baker's yeast)).